Here is a 259-residue protein sequence, read N- to C-terminus: F-box/kelch-repeat protein At2g22050 (259 aa).

Residues 1–12 (MSPSSKKFKKQS) are compositionally biased toward basic residues. Residues 1–29 (MSPSSKKFKKQSSSKSVKPPLEDNDPSLP) are disordered. Residues 28–76 (LPSFTSLPDEIVLDCLQRVPRSYYLNLCRVSKTLRSLVRSPELSRLRTL) enclose the F-box domain. One copy of the Kelch repeat lies at 142–186 (EIYFVGGSFEPMSELWILDTRTGMFRQGPSMKVARTDEASVGVIN).

In Arabidopsis thaliana (Mouse-ear cress), this protein is F-box/kelch-repeat protein At2g22050.